Consider the following 626-residue polypeptide: Chaperone protein HtpG (626 aa).

The interval 1 to 331 (MSETVERHEF…TDDLPLNVSR (331 aa)) is a; substrate-binding. The b stretch occupies residues 332–544 (EMLQSTPTLQ…GMGPDLQMQR (213 aa)). The tract at residues 545–626 (LLRRAGRGFG…GTAAKPAESA (82 aa)) is c.

Belongs to the heat shock protein 90 family. In terms of assembly, homodimer.

The protein resides in the cytoplasm. Its function is as follows. Molecular chaperone. Has ATPase activity. This chain is Chaperone protein HtpG, found in Methylorubrum extorquens (strain PA1) (Methylobacterium extorquens).